Reading from the N-terminus, the 120-residue chain is uncharacterized protein (120 aa).

A run of 3 helical transmembrane segments spans residues 24 to 44, 61 to 81, and 86 to 106; these read ALLG…ALCY, IGVV…NLAV, and PLGK…GIVV.

The protein to M.leprae ML1176.

The protein localises to the cell membrane. This is an uncharacterized protein from Mycobacterium bovis (strain ATCC BAA-935 / AF2122/97).